The primary structure comprises 86 residues: Large ribosomal subunit protein eL30 (86 aa).

The protein belongs to the eukaryotic ribosomal protein eL30 family.

This chain is Large ribosomal subunit protein eL30 (rpl30e), found in Archaeoglobus fulgidus (strain ATCC 49558 / DSM 4304 / JCM 9628 / NBRC 100126 / VC-16).